A 341-amino-acid polypeptide reads, in one-letter code: Small ribosomal subunit biogenesis GTPase RsgA (341 aa).

Residues Arg-112–Leu-268 form the CP-type G domain. GTP is bound by residues Thr-157–Asp-160 and Gly-210–Thr-218. Cys-290, Cys-295, His-297, and Cys-303 together coordinate Zn(2+).

Belongs to the TRAFAC class YlqF/YawG GTPase family. RsgA subfamily. In terms of assembly, monomer. Associates with 30S ribosomal subunit, binds 16S rRNA. Zn(2+) serves as cofactor.

It is found in the cytoplasm. Its function is as follows. One of several proteins that assist in the late maturation steps of the functional core of the 30S ribosomal subunit. Helps release RbfA from mature subunits. May play a role in the assembly of ribosomal proteins into the subunit. Circularly permuted GTPase that catalyzes slow GTP hydrolysis, GTPase activity is stimulated by the 30S ribosomal subunit. In Xylella fastidiosa (strain Temecula1 / ATCC 700964), this protein is Small ribosomal subunit biogenesis GTPase RsgA.